The following is an 83-amino-acid chain: Putative defensin-like protein 111 (83 aa).

Positions 1–24 are cleaved as a signal peptide; the sequence is MAITKKILLPFVLTILFVISSVHC. 4 cysteine pairs are disulfide-bonded: cysteine 40–cysteine 80, cysteine 46–cysteine 69, cysteine 54–cysteine 78, and cysteine 58–cysteine 79.

Belongs to the DEFL family.

It localises to the secreted. This is Putative defensin-like protein 111 (LCR50) from Arabidopsis thaliana (Mouse-ear cress).